We begin with the raw amino-acid sequence, 491 residues long: Protein DETOXIFICATION 20 (491 aa).

12 helical membrane passes run 37 to 57 (LWVV…VSMV), 75 to 95 (ITFT…AGAL), 120 to 140 (IVLT…GPIL), 156 to 176 (LALW…CQMF), 185 to 205 (IISY…WLLV), 214 to 234 (GAMT…LLYV), 265 to 285 (GGML…TGNL), 296 to 316 (AICI…LAAV), 337 to 357 (LIAV…FLFL), 381 to 401 (LLAF…VAIG), 413 to 433 (LACY…VVGL), and 438 to 458 (VWIG…VMTL).

This sequence belongs to the multi antimicrobial extrusion (MATE) (TC 2.A.66.1) family.

The protein resides in the membrane. The sequence is that of Protein DETOXIFICATION 20 from Arabidopsis thaliana (Mouse-ear cress).